We begin with the raw amino-acid sequence, 531 residues long: MISRGLLSKGILSIIKRKNTGNLIPHVYYSEYHADIEERRKALGRLGISLYPSVTSDASTTTIPVIIEKWRNKITKSEIAMVRYTVCGRISSIRYSGSKLAFFDVLYGNKKLQVVFNKKNIGTEEEMKGKFIPRLKALQKGDCIQCSGNVGRSGSGELSIYATELPKLLSPCLHPIPVKLTNYEKRFEKRFVDMMSNTKSLELLEKRYRIIESIRKFFSERGFLEVETPILSHHFGGATARPFITSDIHKLPLTLRCAPELWLKQLVIGGMNRVFELGKNFRNEGIDATHNPEFTSCEAYCAYLNLEGMKKLTEELIRFICLTINGNLQISGQTVDLEKGFEVIEFIPALQKELNVELSPLDNSENCRKQLISIFKRCEIMLPKTCTVAHLLDKLFDSLVLKYNTSSPKFVINHPEVMSPLAKSDIKLYGAVEQRISKRFELYIGGYEICNAYEEENDPVAQYHKFQAQKYDRLQLGDDETPAPDSDFVHALEYGLPPTAGWGMGVDRLVMLMTGQSKISEILPFGSLRYV.

Residues 1 to 18 (MISRGLLSKGILSIIKRK) constitute a mitochondrion transit peptide.

The protein belongs to the class-II aminoacyl-tRNA synthetase family.

The protein resides in the mitochondrion. The enzyme catalyses tRNA(Lys) + L-lysine + ATP = L-lysyl-tRNA(Lys) + AMP + diphosphate. The chain is Lysine--tRNA ligase, mitochondrial (msk1) from Schizosaccharomyces pombe (strain 972 / ATCC 24843) (Fission yeast).